Consider the following 623-residue polypeptide: mRNA-capping enzyme (623 aa).

The segment at 13 to 224 (MGLPDRWLHC…IDNGRPSTSQ (212 aa)) is TPase. The Tyrosine-protein phosphatase domain occupies 44-196 (YDNQIAERRY…YDPTEDDKIL (153 aa)). Catalysis depends on cysteine 136, which acts as the Phosphocysteine intermediate. A compositionally biased stretch (polar residues) spans 213-229 (TQIDNGRPSTSQQIPAT). The interval 213-243 (TQIDNGRPSTSQQIPATNGNNNQNGNQLSGG) is disordered. The segment covering 230–239 (NGNNNQNGNQ) has biased composition (low complexity). Residues 241–585 (SGGGDNSKLF…NPVTETYLIE (345 aa)) form a GTase region. The active-site N6-GMP-lysine intermediate is the lysine 311. GTP contacts are provided by residues arginine 316, arginine 331, 357–359 (DTE), 477–479 (KWK), and 553–558 (RERTDK). The interval 603 to 623 (HHQIHQQQLHEGEPEARRQKL) is disordered. Positions 610-623 (QLHEGEPEARRQKL) are enriched in basic and acidic residues.

This sequence in the N-terminal section; belongs to the non-receptor class of the protein-tyrosine phosphatase family. The protein in the C-terminal section; belongs to the eukaryotic GTase family.

Its subcellular location is the nucleus. The catalysed reaction is a 5'-end triphospho-ribonucleoside in mRNA + H2O = a 5'-end diphospho-ribonucleoside in mRNA + phosphate + H(+). It catalyses the reaction a 5'-end diphospho-ribonucleoside in mRNA + GTP + H(+) = a 5'-end (5'-triphosphoguanosine)-ribonucleoside in mRNA + diphosphate. Its activity is regulated as follows. RNA triphosphatase activity is inhibited by magnesium. Its function is as follows. Bifunctional mRNA-capping enzyme exhibiting RNA 5'-triphosphate monophosphatase activity in the N-terminal part and mRNA guanylyltransferase activity in the C-terminal part. Catalyzes the first two steps of cap formation: by removing the gamma-phosphate from the 5'-triphosphate end of nascent mRNA to yield a diphosphate end, and by transferring the GMP moiety of GTP to the 5'-diphosphate terminus via a covalent enzyme-GMP reaction intermediate. This is mRNA-capping enzyme (cel-1) from Caenorhabditis elegans.